A 942-amino-acid polypeptide reads, in one-letter code: Protein NLP1 (942 aa).

The span at 1-11 (MEQKPSPPPPP) shows a compositional bias: pro residues. Disordered regions lie at residues 1–32 (MEQK…GDIA), 77–106 (TTPA…VSPA), 594–620 (VKEN…TKTE), 723–753 (FQLE…PSCS), and 759–778 (SLGC…APQL). The segment covering 21-32 (MGCGMGGTGDIA) has biased composition (gly residues). Positions 597-609 (NTCSSDPSNSNSD) are enriched in polar residues. Positions 609–690 (DKAVEKRRTK…IDSVHGPEGT (82 aa)) constitute an RWP-RK domain. A compositionally biased stretch (low complexity) spans 743–753 (SGSNSISPSCS). Residues 765-774 (VPKTQQQHGS) are compositionally biased toward polar residues. The PB1 domain occupies 844-927 (SLKIKAIYGE…QTVRILVNPS (84 aa)).

Its subcellular location is the nucleus. In terms of biological role, probable transcription factor. The chain is Protein NLP1 (NLP1) from Oryza sativa subsp. japonica (Rice).